The primary structure comprises 125 residues: MGFWKFPPFLVLSILVLYQAGMFHAAPFRSVFDGRFDPATLDEEESRLLLAAMVNDYEQMRTRESEKAQKTEGSRIQKRACNTATCMTHRLAGWLSRSGSMVRSNLLPTKMGFKIFSGPRRNFWF.

Residues 1 to 25 form the signal peptide; that stretch reads MGFWKFPPFLVLSILVLYQAGMFHA. The propeptide occupies 26 to 77; it reads APFRSVFDGRFDPATLDEEESRLLLAAMVNDYEQMRTRESEKAQKTEGSRIQ. Cys-81 and Cys-86 are oxidised to a cystine.

It belongs to the calcitonin family.

Its subcellular location is the secreted. Stimulates cAMP production via the calcitonin receptor (CT) but not via the CT-like (CL) receptor. In Ovis aries (Sheep), this protein is Calcitonin receptor-stimulating peptide 1 (CRSP1).